A 366-amino-acid polypeptide reads, in one-letter code: D-alanine--D-alanine ligase (366 aa).

In terms of domain architecture, ATP-grasp spans 145 to 348 (KRLLDDAGLA…YQSLITKLIE (204 aa)). 175-230 (VEQLGLPLFIKPANLGSSVGISKVNNEAEFNAALSMAFEYDLKVIIESAIVGREIE) serves as a coordination point for ATP. Mg(2+) is bound by residues aspartate 302, glutamate 315, and asparagine 317.

The protein belongs to the D-alanine--D-alanine ligase family. It depends on Mg(2+) as a cofactor. Requires Mn(2+) as cofactor.

It is found in the cytoplasm. It carries out the reaction 2 D-alanine + ATP = D-alanyl-D-alanine + ADP + phosphate + H(+). It participates in cell wall biogenesis; peptidoglycan biosynthesis. Its function is as follows. Cell wall formation. In Proteus mirabilis (strain HI4320), this protein is D-alanine--D-alanine ligase.